A 119-amino-acid polypeptide reads, in one-letter code: Small ribosomal subunit protein uS10 (119 aa).

Alanine 2 bears the N-acetylalanine mark. Lysine 4 is covalently cross-linked (Glycyl lysine isopeptide (Lys-Gly) (interchain with G-Cter in ubiquitin)). Residue lysine 8 is modified to N6-succinyllysine; alternate. Lysine 8 is covalently cross-linked (Glycyl lysine isopeptide (Lys-Gly) (interchain with G-Cter in ubiquitin); alternate). Threonine 9 is modified (phosphothreonine). N6-acetyllysine is present on residues lysine 34 and lysine 75. Phosphoserine is present on serine 93.

Belongs to the universal ribosomal protein uS10 family. As to quaternary structure, component of the 40S small ribosomal subunit. Post-translationally, polyubiquitinated by ZNF598 via 'Lys-63'-linked ubiquitin chains when a ribosome has stalled, initiating the ribosome quality control (RQC) pathway to degrade the potentially detrimental aberrant nascent polypeptide. Deubiquitinated by OTUD3 and USP21, antagonizing ZNF598 activity. Ufmylated by UFL1.

The protein resides in the cytoplasm. Its function is as follows. Component of the small ribosomal subunit. The ribosome is a large ribonucleoprotein complex responsible for the synthesis of proteins in the cell. This chain is Small ribosomal subunit protein uS10 (Rps20), found in Rattus norvegicus (Rat).